The chain runs to 65 residues: Disintegrin CC8A (65 aa).

The Disintegrin domain occupies 1–65; that stretch reads MNSAHPCCDP…SDCPRNRIKK (65 aa). 4 disulfide bridges follow: C7/C30, C21/C27, C26/C51, and C39/C58. The Cell attachment site motif lies at 43 to 45; the sequence is RGD.

Belongs to the disintegrin family. Dimeric disintegrin subfamily. Heterodimer with CC8B; disulfide-linked. In terms of tissue distribution, expressed by the venom gland.

Its subcellular location is the secreted. In terms of biological role, inhibits integrins alpha-IIb/beta-3 (ITGA2B/ITGB3), alpha-V/beta-3 (ITGAV/ITGB3), and alpha-5/beta-1 (ITGA5/ITGB1). This chain is Disintegrin CC8A, found in Cerastes cerastes (Horned desert viper).